A 113-amino-acid polypeptide reads, in one-letter code: MSNQALLETLNQTTELLSVKLAELAKLASMETNEDTEDCQLSVVTNGLMMVNNQTLQLVRGVQDLILLTRNIREKWLLTQIPEQLTPKEQDSINHEELTELLESCVSEIISDV.

This sequence belongs to the Mediator complex subunit 22 family. Component of the Mediator complex.

It localises to the nucleus. In terms of biological role, component of the Mediator complex, a coactivator involved in the regulated transcription of nearly all RNA polymerase II-dependent genes. Mediator functions as a bridge to convey information from gene-specific regulatory proteins to the basal RNA polymerase II transcription machinery. Mediator is recruited to promoters by direct interactions with regulatory proteins and serves as a scaffold for the assembly of a functional preinitiation complex with RNA polymerase II and the general transcription factors. The sequence is that of Mediator of RNA polymerase II transcription subunit 22 (SRB6) from Candida glabrata (strain ATCC 2001 / BCRC 20586 / JCM 3761 / NBRC 0622 / NRRL Y-65 / CBS 138) (Yeast).